The following is a 400-amino-acid chain: Ribosomal RNA dihydrouridine synthase (400 aa).

FAD-binding residues include alanine 14, aspartate 33, asparagine 34, arginine 40, glycine 46, asparagine 51, valine 131, glutamate 367, and phenylalanine 380.

This sequence belongs to the BaiN/RdsA family. RdsA subfamily. FAD is required as a cofactor.

It catalyses the reaction a 5,6-dihydrouridine in mRNA + NAD(+) = a uridine in mRNA + NADH + H(+). Functionally, catalyzes the synthesis of 5,6-dihydrouridine (D) at position 2449 in 23S rRNA. Can use NADH as a source of reducing equivalents but not NADPH. This Escherichia coli (strain K12) protein is Ribosomal RNA dihydrouridine synthase.